A 592-amino-acid chain; its full sequence is Condensin-2 complex subunit H2 (592 aa).

Disordered regions lie at residues 89–116 and 261–285; these read NKKR…DGCE and EAPS…PKQL. Positions 96–108 are enriched in polar residues; sequence GSSSDGNQEQAPS.

Belongs to the CND2 H2 (condensin-2 subunit 2) family. In terms of assembly, component of the condensin-2 complex, which contains the smc2 and smc4 heterodimer, and three non SMC subunits, ncapg2, ncaph2 and ncapd3 that probably regulate the complex.

It is found in the nucleus. Regulatory subunit of the condensin-2 complex, a complex that seems to provide chromosomes with an additional level of organization and rigidity and in establishing mitotic chromosome architecture. This is Condensin-2 complex subunit H2 (ncaph2) from Danio rerio (Zebrafish).